We begin with the raw amino-acid sequence, 201 residues long: Small ribosomal subunit protein uS4 (201 aa).

Positions 1 to 45 (MARYTGPLTKKSRRLGTDLVGNDKSFERRPYPPGVHGRGRTKDSE) are disordered. An S4 RNA-binding domain is found at 91–157 (SRLDNVVYRA…PPIVIARETF (67 aa)).

The protein belongs to the universal ribosomal protein uS4 family. Part of the 30S ribosomal subunit. Contacts protein S5. The interaction surface between S4 and S5 is involved in control of translational fidelity.

Its function is as follows. One of the primary rRNA binding proteins, it binds directly to 16S rRNA where it nucleates assembly of the body of the 30S subunit. Functionally, with S5 and S12 plays an important role in translational accuracy. The chain is Small ribosomal subunit protein uS4 from Cutibacterium acnes (strain DSM 16379 / KPA171202) (Propionibacterium acnes).